We begin with the raw amino-acid sequence, 445 residues long: Ribulose bisphosphate carboxylase large chain (445 aa).

Asparagine 89 and threonine 139 together coordinate substrate. Residue lysine 141 is the Proton acceptor of the active site. Residue lysine 143 coordinates substrate. Positions 167, 169, and 170 each coordinate Mg(2+). Residue lysine 167 is modified to N6-carboxylysine. Residue histidine 260 is the Proton acceptor of the active site. Positions 261, 293, and 345 each coordinate substrate.

Belongs to the RuBisCO large chain family. Type I subfamily. Heterohexadecamer of 8 large chains and 8 small chains; disulfide-linked. The disulfide link is formed within the large subunit homodimers. The cofactor is Mg(2+). In terms of processing, the disulfide bond which can form in the large chain dimeric partners within the hexadecamer appears to be associated with oxidative stress and protein turnover.

The protein resides in the plastid. It is found in the chloroplast. The enzyme catalyses 2 (2R)-3-phosphoglycerate + 2 H(+) = D-ribulose 1,5-bisphosphate + CO2 + H2O. It carries out the reaction D-ribulose 1,5-bisphosphate + O2 = 2-phosphoglycolate + (2R)-3-phosphoglycerate + 2 H(+). Its function is as follows. RuBisCO catalyzes two reactions: the carboxylation of D-ribulose 1,5-bisphosphate, the primary event in carbon dioxide fixation, as well as the oxidative fragmentation of the pentose substrate in the photorespiration process. Both reactions occur simultaneously and in competition at the same active site. The sequence is that of Ribulose bisphosphate carboxylase large chain from Callicarpa dichotoma (Purple beautyberry).